We begin with the raw amino-acid sequence, 135 residues long: Small ribosomal subunit protein bS18 (135 aa).

A disordered region spans residues Met-1–Phe-65. The span at Pro-9 to Arg-41 shows a compositional bias: gly residues. Over residues Gly-42–Gly-61 the composition is skewed to basic and acidic residues.

Belongs to the bacterial ribosomal protein bS18 family. As to quaternary structure, part of the 30S ribosomal subunit. Forms a tight heterodimer with protein bS6.

Its function is as follows. Binds as a heterodimer with protein bS6 to the central domain of the 16S rRNA, where it helps stabilize the platform of the 30S subunit. The protein is Small ribosomal subunit protein bS18 of Anaeromyxobacter dehalogenans (strain 2CP-C).